A 233-amino-acid polypeptide reads, in one-letter code: NAD(P)H-hydrate epimerase (233 aa).

The YjeF N-terminal domain maps to 15 to 218 (SQQFDVELMS…KLQEKYNFIV (204 aa)). 67 to 71 (NNGGD) contacts (6S)-NADPHX. K(+) is bound by residues N68 and D128. (6S)-NADPHX-binding positions include 132–138 (GFSFKPP), Y143, and D161. S164 contacts K(+).

It belongs to the NnrE/AIBP family. Requires K(+) as cofactor.

The catalysed reaction is (6R)-NADHX = (6S)-NADHX. It catalyses the reaction (6R)-NADPHX = (6S)-NADPHX. Catalyzes the epimerization of the S- and R-forms of NAD(P)HX, a damaged form of NAD(P)H that is a result of enzymatic or heat-dependent hydration. This is a prerequisite for the S-specific NAD(P)H-hydrate dehydratase to allow the repair of both epimers of NAD(P)HX. This chain is NAD(P)H-hydrate epimerase, found in Paramecium tetraurelia.